The following is a 395-amino-acid chain: MNNSEWANKNYYADLGVSSSASEDEIKKAYRKLARENHPDKNPGDKAAEDRFKKAAEAYDVLGDDKKRKEYDELKALLASGGIRGGFGSGGAGFPGGFRTSTGGFDTSDLFGGGQGGGFSTDGGLGDIFGGLFNRGAGSHQSARPTRGADVQTEITLSFVEAAKGTTIPVELTGDAPCNTCHGSGSKSGHPAKCGTCDGTGFTSENKGAFGFSAPCATCGGTGEIITDPCDNCHGRGTVRKSRSITVRIPTGVEDGQKVRLAGQGEAGPNGKPAGDLFVKVHVKKDDVFTRDGSNILITIPVSFSELALGGAISVPTLNKPVKLKLPAGTPDGRTLRVRGRGIEARDSTGDLLVTVQVSVPKNLDDNAAEALRAYAEAETNSGFDPRANWAGQNR.

In terms of domain architecture, J spans 10–75 (NYYADLGVSS…KKRKEYDELK (66 aa)). The CR-type zinc finger occupies 165–242 (GTTIPVELTG…CHGRGTVRKS (78 aa)). Residues cysteine 178, cysteine 181, cysteine 194, cysteine 197, cysteine 216, cysteine 219, cysteine 230, and cysteine 233 each contribute to the Zn(2+) site. 4 CXXCXGXG motif repeats span residues 178–185 (CNTCHGSG), 194–201 (CGTCDGTG), 216–223 (CATCGGTG), and 230–237 (CDNCHGRG).

Belongs to the DnaJ family. In terms of assembly, homodimer. The cofactor is Zn(2+).

The protein resides in the cytoplasm. Its function is as follows. Participates actively in the response to hyperosmotic and heat shock by preventing the aggregation of stress-denatured proteins and by disaggregating proteins, also in an autonomous, DnaK-independent fashion. Unfolded proteins bind initially to DnaJ; upon interaction with the DnaJ-bound protein, DnaK hydrolyzes its bound ATP, resulting in the formation of a stable complex. GrpE releases ADP from DnaK; ATP binding to DnaK triggers the release of the substrate protein, thus completing the reaction cycle. Several rounds of ATP-dependent interactions between DnaJ, DnaK and GrpE are required for fully efficient folding. Also involved, together with DnaK and GrpE, in the DNA replication of plasmids through activation of initiation proteins. The chain is Chaperone protein DnaJ 2 from Corynebacterium glutamicum (strain ATCC 13032 / DSM 20300 / JCM 1318 / BCRC 11384 / CCUG 27702 / LMG 3730 / NBRC 12168 / NCIMB 10025 / NRRL B-2784 / 534).